We begin with the raw amino-acid sequence, 561 residues long: Centromere protein T (561 aa).

The segment at 1-78 (MADHNPDGDP…IGRSAHVQAR (78 aa)) is disordered. Basic and acidic residues predominate over residues 18-27 (RVLDTADPRT). A compositionally biased stretch (polar residues) spans 45–57 (TASSRRLSGQTKT). Residue S47 is modified to Phosphoserine. T85 is subject to Phosphothreonine. The flexible stalk domain stretch occupies residues 93–421 (ILLTAPESSI…RHHQFPEPAP (329 aa)). Disordered regions lie at residues 114–134 (APQV…ELQL), 256–293 (HSLP…GKPA), and 314–457 (SSGV…DPHK). Residues 276–289 (RTQSSGPGLQNNSP) are compositionally biased toward polar residues. Basic and acidic residues predominate over residues 329 to 341 (GVEEAEKKMKEEG). 7 positions are modified to phosphoserine: S343, S345, S356, S373, S385, S386, and S397. Residues 365 to 376 (TQVTEAEGSQGT) show a composition bias toward polar residues. Low complexity predominate over residues 439 to 450 (RCPPRSRTTGPR).

It belongs to the CENP-T/CNN1 family. As to quaternary structure, component of the CENPA-CAD complex, composed of CENPI, CENPK, CENPL, CENPO, CENPP, CENPQ, CENPR and CENPS. The CENPA-CAD complex is probably recruited on centromeres by the CENPA-NAC complex, at least composed of CENPA, CENPC, CENPH, CENPM, CENPN, CENPT and CENPU. Identified in a centromeric complex containing histones H2A, H2B, H3 and H4, and at least CENPA, CENPB, CENPC, CENPT, CENPN, HJURP, SUPT16H, SSRP1 and RSF1. Interacts (via N-terminus) with the NDC80 complex. Heterodimer with CENPW; this dimer coassembles with CENPS-CENPX heterodimers at centromeres to form the tetrameric CENP-T-W-S-X complex. In terms of processing, dynamically phosphorylated during the cell cycle. Phosphorylated during G2 phase, metaphase and anaphase, but not during telophase or G1 phase.

The protein localises to the nucleus. It is found in the chromosome. The protein resides in the centromere. It localises to the kinetochore. Its function is as follows. Component of the CENPA-NAC (nucleosome-associated) complex, a complex that plays a central role in assembly of kinetochore proteins, mitotic progression and chromosome segregation. The CENPA-NAC complex recruits the CENPA-CAD (nucleosome distal) complex and may be involved in incorporation of newly synthesized CENPA into centromeres. Part of a nucleosome-associated complex that binds specifically to histone H3-containing nucleosomes at the centromere, as opposed to nucleosomes containing CENPA. Component of the heterotetrameric CENP-T-W-S-X complex that binds and supercoils DNA, and plays an important role in kinetochore assembly. CENPT has a fundamental role in kinetochore assembly and function. It is one of the inner kinetochore proteins, with most further proteins binding downstream. Required for normal chromosome organization and normal progress through mitosis. In Macaca fascicularis (Crab-eating macaque), this protein is Centromere protein T (CENPT).